The sequence spans 160 residues: Cytochrome b6-f complex subunit 4 (160 aa).

Helical transmembrane passes span 36–56 (LLYMFPVVIFGSFACVIGLAV), 95–115 (LLGVLLMAAVPAGLLTVPFIE), and 131–151 (TVFLIGTFAAIWLGIGACLPI).

Belongs to the cytochrome b family. PetD subfamily. As to quaternary structure, the 4 large subunits of the cytochrome b6-f complex are cytochrome b6, subunit IV (17 kDa polypeptide, petD), cytochrome f and the Rieske protein, while the 4 small subunits are petG, petL, petM and petN. The complex functions as a dimer.

The protein localises to the plastid. It is found in the chloroplast thylakoid membrane. Its function is as follows. Component of the cytochrome b6-f complex, which mediates electron transfer between photosystem II (PSII) and photosystem I (PSI), cyclic electron flow around PSI, and state transitions. This Tupiella akineta (Green alga) protein is Cytochrome b6-f complex subunit 4.